A 172-amino-acid polypeptide reads, in one-letter code: Ribosome maturation factor RimM (172 aa).

Positions 95 to 168 (AEGEFYYHQI…RVDVEIMEGL (74 aa)) constitute a PRC barrel domain.

The protein belongs to the RimM family. Binds ribosomal protein uS19.

Its subcellular location is the cytoplasm. In terms of biological role, an accessory protein needed during the final step in the assembly of 30S ribosomal subunit, possibly for assembly of the head region. Essential for efficient processing of 16S rRNA. May be needed both before and after RbfA during the maturation of 16S rRNA. It has affinity for free ribosomal 30S subunits but not for 70S ribosomes. This Streptococcus equi subsp. equi (strain 4047) protein is Ribosome maturation factor RimM.